Reading from the N-terminus, the 1847-residue chain is Replication factor C small subunit (1847 aa).

3 consecutive DOD-type homing endonuclease domains span residues 179–311, 780–927, and 1348–1508; these read WLGY…RFGI, MLGL…ISGI, and LLGF…EFEV.

It belongs to the activator 1 small subunits family. RfcS subfamily. In terms of assembly, heteromultimer composed of small subunits (RfcS) and large subunits (RfcL). Post-translationally, this protein undergoes a protein self splicing that involves a post-translational excision of the intervening region (intein) followed by peptide ligation.

In terms of biological role, part of the RFC clamp loader complex which loads the PCNA sliding clamp onto DNA. The polypeptide is Replication factor C small subunit (rfcS) (Methanocaldococcus jannaschii (strain ATCC 43067 / DSM 2661 / JAL-1 / JCM 10045 / NBRC 100440) (Methanococcus jannaschii)).